The primary structure comprises 422 residues: Probable glucuronosyltransferase Os01g0926400 (422 aa).

Over 1–8 (MGTRPCAG) the chain is Cytoplasmic. Residues 9 to 29 (VASAVAAAVAVLLLAVSCFAA) traverse the membrane as a helical; Signal-anchor for type II membrane protein segment. Topologically, residues 30–422 (AATTTQKHGR…QGLENDLKPW (393 aa)) are lumenal. Residue N149 is glycosylated (N-linked (GlcNAc...) asparagine).

It belongs to the glycosyltransferase 47 family.

It localises to the golgi apparatus membrane. In terms of biological role, involved in the synthesis of glucuronoxylan hemicellulose in secondary cell walls. In Oryza sativa subsp. japonica (Rice), this protein is Probable glucuronosyltransferase Os01g0926400.